Here is a 28-residue protein sequence, read N- to C-terminus: M-poneritoxin-Dq4b/U1-poneritoxin-Dq4c/U1-poneritoxin-Dq4d (28 aa).

M20 bears the Methionine sulfoxide; in form U1-PONTX-Dq4d mark. At A28 the chain carries Alanine amide; in form Dq-1362 and U1-PONTX-Dq4d.

Post-translationally, occurs in 3 forms, M-PONTX-Dq4b has an amidated Ala-28, U1-PONTX-Dq4d has an amidated Ala-28 and an oxidized Met-20, U1-PONTX-Dq4c has no modifications at either Met-20 or Ala-28. In terms of tissue distribution, expressed by the venom gland.

Its subcellular location is the secreted. Functionally, M-poneritoxin-Dq4b: this synthetic peptide has antimicrobial activity against Gram-positive bacteria B.amyloliquefacies S499 (MIC=0.1 mM), L.monocytogenes 2231 and S.aureus ATCC 29213, against Gram-negative bacteria P.putida BTP1, P.aeruginosa PaO1 and E.coli ATCC 10536, and against the fungi S.cerevisiae, R.mucilaginosa and C.cucumerinum. Not active against the fungi F.oxysporum and B.cinerea. In Dinoponera quadriceps (South American ant), this protein is M-poneritoxin-Dq4b/U1-poneritoxin-Dq4c/U1-poneritoxin-Dq4d.